The primary structure comprises 715 residues: DNA mismatch repair protein MLH3 (715 aa).

Belongs to the DNA mismatch repair MutL/HexB family. In terms of assembly, heterodimer of MLH1 and MLH3, called MutLbeta, which is involved in correction of a specific subset of IDLs when associated with MutSbeta. Forms a ternary complex with a SGS1-TOP3 heterodimer during meiosis.

It is found in the nucleus. Its function is as follows. Involved in DNA mismatch repair (MMR), correcting insertion-deletion loops (IDLs) resulting from DNA replication, DNA damage or from recombination events between non-identical sequences during meiosis. Component of the MutLbeta heterodimer, which probably forms a ternary complex with the MutSbeta heterodimer that initially recognizes the DNA mismatches. This complex is thought to be responsible for directing the downstream MMR events, including strand discrimination, excision, and resynthesis. Plays a major role in promoting meiotic crossing-over and is involved in maintaining the genetic stability of simple sequence repeats by correction of frameshift intermediates. The polypeptide is DNA mismatch repair protein MLH3 (MLH3) (Saccharomyces cerevisiae (strain ATCC 204508 / S288c) (Baker's yeast)).